A 304-amino-acid chain; its full sequence is UTP--glucose-1-phosphate uridylyltransferase 1 (304 aa).

Belongs to the UDPGP type 2 family.

The enzyme catalyses alpha-D-glucose 1-phosphate + UTP + H(+) = UDP-alpha-D-glucose + diphosphate. Its pathway is carbohydrate metabolism; nucleotide-sugar metabolism. The sequence is that of UTP--glucose-1-phosphate uridylyltransferase 1 (hasC1) from Streptococcus pyogenes serotype M3 (strain ATCC BAA-595 / MGAS315).